Reading from the N-terminus, the 462-residue chain is Putative zinc metalloprotease RSc1411 (462 aa).

The chain crosses the membrane as a helical span at residues methionine 1–glycine 21. Zn(2+) is bound at residue histidine 18. Glutamate 19 is an active-site residue. Histidine 22 provides a ligand contact to Zn(2+). A helical transmembrane segment spans residues phenylalanine 102 to alanine 124. The PDZ domain occupies threonine 201–isoleucine 283. The next 2 membrane-spanning stretches (helical) occupy residues phenylalanine 386 to proline 406 and tryptophan 430 to leucine 450.

This sequence belongs to the peptidase M50B family. Requires Zn(2+) as cofactor.

The protein resides in the cell inner membrane. This Ralstonia nicotianae (strain ATCC BAA-1114 / GMI1000) (Ralstonia solanacearum) protein is Putative zinc metalloprotease RSc1411.